We begin with the raw amino-acid sequence, 967 residues long: Aminopeptidase N (967 aa).

At 1–8 the chain is on the cytoplasmic side; sequence MAKGFYIS. The chain crosses the membrane as a helical; Signal-anchor for type II membrane protein span at residues 9–32; sequence KPVGILAILLGVAAVCTIIALSVV. The interval 33 to 66 is cytosolic Ser/Thr-rich junction; sequence YSQEKNRSTESSTAASTAAPTGPTTTVATTLDQS. At 33-967 the chain is on the extracellular side; sequence YSQEKNRSTE…VVLRWFTENS (935 aa). A glycan (N-linked (GlcNAc...) asparagine) is linked at Asn-38. A disordered region spans residues 41-61; sequence TESSTAASTAAPTGPTTTVAT. The tract at residues 67 to 967 is metalloprotease; it reads KPWNVYRLPK…VVLRWFTENS (901 aa). N-linked (GlcNAc...) asparagine glycosylation is found at Asn-84 and Asn-126. Sulfotyrosine is present on Tyr-175. N-linked (GlcNAc...) asparagine glycans are attached at residues Asn-233 and Asn-338. A substrate-binding site is contributed by 351–355; it reads GAMEN. His-387 is a binding site for Zn(2+). Glu-388 serves as the catalytic Proton acceptor. 2 residues coordinate Zn(2+): His-391 and Glu-410. Tyr-418 bears the Sulfotyrosine mark. Asn-626, Asn-682, and Asn-740 each carry an N-linked (GlcNAc...) asparagine glycan. Residues 670-840 are interaction with FCoV and TGEV spike glycoprotein; that stretch reads ASAQKVPVTL…GALACSNQVW (171 aa). 2 cysteine pairs are disulfide-bonded: Cys-762/Cys-769 and Cys-799/Cys-835.

This sequence belongs to the peptidase M1 family. As to quaternary structure, homodimer. Interacts with SLC6A19. In terms of assembly, (Microbial infection) Interacts with FCoV, CCoV, TGEV and HCoV-229E spike glycoprotein. Requires Zn(2+) as cofactor. Sulfated. In terms of processing, N- and O-glycosylated. Post-translationally, may undergo proteolysis and give rise to a soluble form.

The protein localises to the cell membrane. The enzyme catalyses Release of an N-terminal amino acid, Xaa-|-Yaa- from a peptide, amide or arylamide. Xaa is preferably Ala, but may be most amino acids including Pro (slow action). When a terminal hydrophobic residue is followed by a prolyl residue, the two may be released as an intact Xaa-Pro dipeptide.. Functionally, broad specificity aminopeptidase which plays a role in the final digestion of peptides generated from hydrolysis of proteins by gastric and pancreatic proteases. Also involved in the processing of various peptides including peptide hormones, such as angiotensin III and IV, neuropeptides, and chemokines. May also be involved the cleavage of peptides bound to major histocompatibility complex class II molecules of antigen presenting cells. May have a role in angiogenesis and promote cholesterol crystallization. May have a role in amino acid transport by acting as binding partner of amino acid transporter SLC6A19 and regulating its activity. Its function is as follows. (Microbial infection) In case of feline coronavirus (FCoV) infection, serves as a receptor for FCoV spike glycoprotein. It is as well a receptor for other serogroup I coronaviruses, like canine coronavirus (CCoV), porcine transmissible gastroenteritis virus (TGEV), and human coronavirus 229E (HCoV-229E). Also serves as a receptor for infectious bronchitis virus (IBV, Arkansas 99 serotype) in serogroup III. This chain is Aminopeptidase N (ANPEP), found in Felis catus (Cat).